The chain runs to 380 residues: Putative RNA ligase (380 aa).

Functionally, putative RNA ligase. Is able to catalyze the adenylation reaction of ssDNA 3'-terminal phosphate (ssDNA 3'p) to 3'-adenylated DNA (ssDNA 3'pp5'A). The protein is Putative RNA ligase of Thermovibrio ammonificans (strain DSM 15698 / JCM 12110 / HB-1).